A 245-amino-acid chain; its full sequence is 1-(5-phosphoribosyl)-5-[(5-phosphoribosylamino)methylideneamino] imidazole-4-carboxamide isomerase (245 aa).

Asp-8 functions as the Proton acceptor in the catalytic mechanism. Catalysis depends on Asp-129, which acts as the Proton donor.

It belongs to the HisA/HisF family.

It is found in the cytoplasm. It carries out the reaction 1-(5-phospho-beta-D-ribosyl)-5-[(5-phospho-beta-D-ribosylamino)methylideneamino]imidazole-4-carboxamide = 5-[(5-phospho-1-deoxy-D-ribulos-1-ylimino)methylamino]-1-(5-phospho-beta-D-ribosyl)imidazole-4-carboxamide. It functions in the pathway amino-acid biosynthesis; L-histidine biosynthesis; L-histidine from 5-phospho-alpha-D-ribose 1-diphosphate: step 4/9. The sequence is that of 1-(5-phosphoribosyl)-5-[(5-phosphoribosylamino)methylideneamino] imidazole-4-carboxamide isomerase from Rhodopseudomonas palustris (strain BisB18).